The chain runs to 275 residues: tRNA pseudouridine synthase A (275 aa).

The active-site Nucleophile is aspartate 56. Tyrosine 109 lines the substrate pocket.

The protein belongs to the tRNA pseudouridine synthase TruA family.

The enzyme catalyses uridine(38/39/40) in tRNA = pseudouridine(38/39/40) in tRNA. In terms of biological role, formation of pseudouridine at positions 38, 39 and 40 in the anticodon stem and loop of transfer RNAs. This is tRNA pseudouridine synthase A from Methanothermobacter thermautotrophicus (strain ATCC 29096 / DSM 1053 / JCM 10044 / NBRC 100330 / Delta H) (Methanobacterium thermoautotrophicum).